A 336-amino-acid chain; its full sequence is Pyridoxal 5'-phosphate synthase subunit PdxS (336 aa).

Asp-64 lines the D-ribose 5-phosphate pocket. Catalysis depends on Lys-121, which acts as the Schiff-base intermediate with D-ribose 5-phosphate. A D-ribose 5-phosphate-binding site is contributed by Gly-193. Residue Lys-205 coordinates D-glyceraldehyde 3-phosphate. D-ribose 5-phosphate is bound by residues Gly-254 and 275–276; that span reads GS.

Belongs to the PdxS/SNZ family. As to quaternary structure, in the presence of PdxT, forms a dodecamer of heterodimers.

The catalysed reaction is aldehydo-D-ribose 5-phosphate + D-glyceraldehyde 3-phosphate + L-glutamine = pyridoxal 5'-phosphate + L-glutamate + phosphate + 3 H2O + H(+). It functions in the pathway cofactor biosynthesis; pyridoxal 5'-phosphate biosynthesis. Its function is as follows. Catalyzes the formation of pyridoxal 5'-phosphate from ribose 5-phosphate (RBP), glyceraldehyde 3-phosphate (G3P) and ammonia. The ammonia is provided by the PdxT subunit. Can also use ribulose 5-phosphate and dihydroxyacetone phosphate as substrates, resulting from enzyme-catalyzed isomerization of RBP and G3P, respectively. In Pyrobaculum aerophilum (strain ATCC 51768 / DSM 7523 / JCM 9630 / CIP 104966 / NBRC 100827 / IM2), this protein is Pyridoxal 5'-phosphate synthase subunit PdxS.